Consider the following 316-residue polypeptide: Lipoyl synthase (316 aa).

[4Fe-4S] cluster contacts are provided by C66, C71, C77, C92, C96, C99, and S306. Residues 78–295 (FNRGTATFMI…NLIAFDLGFK (218 aa)) enclose the Radical SAM core domain.

This sequence belongs to the radical SAM superfamily. Lipoyl synthase family. [4Fe-4S] cluster serves as cofactor.

The protein resides in the cytoplasm. It carries out the reaction [[Fe-S] cluster scaffold protein carrying a second [4Fe-4S](2+) cluster] + N(6)-octanoyl-L-lysyl-[protein] + 2 oxidized [2Fe-2S]-[ferredoxin] + 2 S-adenosyl-L-methionine + 4 H(+) = [[Fe-S] cluster scaffold protein] + N(6)-[(R)-dihydrolipoyl]-L-lysyl-[protein] + 4 Fe(3+) + 2 hydrogen sulfide + 2 5'-deoxyadenosine + 2 L-methionine + 2 reduced [2Fe-2S]-[ferredoxin]. It participates in protein modification; protein lipoylation via endogenous pathway; protein N(6)-(lipoyl)lysine from octanoyl-[acyl-carrier-protein]: step 2/2. Its function is as follows. Catalyzes the radical-mediated insertion of two sulfur atoms into the C-6 and C-8 positions of the octanoyl moiety bound to the lipoyl domains of lipoate-dependent enzymes, thereby converting the octanoylated domains into lipoylated derivatives. The chain is Lipoyl synthase from Wigglesworthia glossinidia brevipalpis.